A 5087-amino-acid chain; its full sequence is Nonribosomal peptide synthetase sidC (5087 aa).

An adenylation 1 region spans residues 165–563 (HEMVRHTGNE…NGELQCMGRI (399 aa)). Positions 671-744 (EPAGDIEQKI…KMAALVLKSQ (74 aa)) constitute a Carrier 1 domain. Serine 705 carries the O-(pantetheine 4'-phosphoryl)serine modification. Residues 782–1112 (DIIPCSPIQT…LFDTLFVWQD (331 aa)) form a condensation 1 region. The adenylation 2 stretch occupies residues 1217–1611 (ELAKTDSERI…GRRDDLVKIR (395 aa)). One can recognise a Carrier 2 domain in the interval 1740 to 1817 (ENLTDNEAKV…RLTRKISQSI (78 aa)). Serine 1777 carries the post-translational modification O-(pantetheine 4'-phosphoryl)serine. The segment at 1855–2272 (KILPCTSLQE…RVMDFSLVES (418 aa)) is condensation 2. Positions 2302–2378 (EEWSAESLEI…EIASVLQGSK (77 aa)) constitute a Carrier 3 domain. Serine 2339 is subject to O-(pantetheine 4'-phosphoryl)serine. The tract at residues 2419-2831 (PCTTPQAGML…STSSSLDTAS (413 aa)) is condensation 3. Residues 2860 to 3258 (ATRHPSRVAL…GRIDDQVKLR (399 aa)) form an adenylation 3 region. In terms of domain architecture, Carrier 4 spans 3387–3464 (TEDTDTIRKI…LLAKAVESPD (78 aa)). Serine 3424 carries the O-(pantetheine 4'-phosphoryl)serine modification. The segment at 3506–3910 (ITPCTSLQDG…RSLVEEPFSN (405 aa)) is condensation 4. In terms of domain architecture, Carrier 5 spans 3943–4019 (FQWSQAASLL…TMMAEVTVNG (77 aa)). Position 3980 is an O-(pantetheine 4'-phosphoryl)serine (serine 3980). The condensation 5 stretch occupies residues 4051–4416 (EHIYPATPLQ…EYSICVELEA (366 aa)). The 74-residue stretch at 4496–4569 (SLLEERIRDT…KMAEIVNSAR (74 aa)) folds into the Carrier 6 domain. O-(pantetheine 4'-phosphoryl)serine is present on serine 4530. Residues 4610–4913 (FLPATAGQVY…IQSDLHEIGS (304 aa)) are condensation 6. A disordered region spans residues 5013-5048 (DVYKVSPPGSQLSQDSPEKQEANNKPSPQPSVDIEA).

Belongs to the NRP synthetase family.

It functions in the pathway siderophore biosynthesis. Nonribosomal peptide synthetase; part of the siderophore biosynthetic pathway. Arthroderma benhamiae produces 2 types of extracellular siderophores, ferrichrome C and ferricrocin. The biosynthesis of these siderophores depends on the hydroxylation of ornithine to N(5)-hydroxyornithine, catalyzed by the monooxygenase sidA. The structure of ferricrocin differs from ferrichrome C only by a serine for alanine substitution and the assembly of both siderophores is suggested to be performed by the nonribosomal peptide synthase (NRPS) sidC. In Arthroderma benhamiae (strain ATCC MYA-4681 / CBS 112371) (Trichophyton mentagrophytes), this protein is Nonribosomal peptide synthetase sidC.